We begin with the raw amino-acid sequence, 236 residues long: MARRYWNINLEEMLEAGVHFGHGTRKWNPRMAPYISAKRKGIHITNLTRTARFLSEACDLVFDAASKGKQFLIVGTKNKAADSVARAAIRARCHYVNKKWLGGMLTNWPTTETRLHKFRDLRTEQKTGGLNRLPKRDAAMLKRQLSRLQTYLGGIKYMTRLPDIVIIVDQQEEYTALRECITLGIPTICLIDTNSDPDLADISIPANDDAIASIRLILNKLVVAICEGRSSYIRNP.

This sequence belongs to the universal ribosomal protein uS2 family.

It is found in the plastid. The protein resides in the chloroplast. The sequence is that of Small ribosomal subunit protein uS2c (rps2) from Gossypium barbadense (Sea Island cotton).